We begin with the raw amino-acid sequence, 102 residues long: Biotrophy-associated secreted protein 4 (102 aa).

Residues 1 to 21 (MQLSFSAIAILLAFAVNHATA) form the signal peptide. A glycan (N-linked (GlcNAc...) asparagine) is linked at Asn36.

The protein resides in the secreted. In terms of biological role, secreted effector involved in biotrophic colonization of plant cells. Participates in transition from the biotrophic to the necrotrophic phase of Magnaporthe oryzae. Elicits rice basic defense responses during the early stage of interaction and promotes cell death in the late stage of compatible interaction. The sequence is that of Biotrophy-associated secreted protein 4 from Pyricularia oryzae (strain 70-15 / ATCC MYA-4617 / FGSC 8958) (Rice blast fungus).